A 248-amino-acid polypeptide reads, in one-letter code: Ribonuclease PH (248 aa).

Residues Arg86 and 124–126 (GTR) each bind phosphate.

This sequence belongs to the RNase PH family. In terms of assembly, homohexameric ring arranged as a trimer of dimers.

It carries out the reaction tRNA(n+1) + phosphate = tRNA(n) + a ribonucleoside 5'-diphosphate. Phosphorolytic 3'-5' exoribonuclease that plays an important role in tRNA 3'-end maturation. Removes nucleotide residues following the 3'-CCA terminus of tRNAs; can also add nucleotides to the ends of RNA molecules by using nucleoside diphosphates as substrates, but this may not be physiologically important. Probably plays a role in initiation of 16S rRNA degradation (leading to ribosome degradation) during starvation. In Listeria monocytogenes serotype 4b (strain CLIP80459), this protein is Ribonuclease PH.